The sequence spans 130 residues: Large ribosomal subunit protein bL31c (130 aa).

Residues 1–36 (MVLTLSNQFLAKIPATPKTLTLPKTSSSTLRPQWSC) constitute a chloroplast transit peptide.

The protein belongs to the bacterial ribosomal protein bL31 family. Type A subfamily. As to quaternary structure, component of the chloroplast large ribosomal subunit (LSU). Mature 70S chloroplast ribosomes of higher plants consist of a small (30S) and a large (50S) subunit. The 30S small subunit contains 1 molecule of ribosomal RNA (16S rRNA) and 24 different proteins. The 50S large subunit contains 3 rRNA molecules (23S, 5S and 4.5S rRNA) and 33 different proteins.

The protein resides in the plastid. It is found in the chloroplast. Its function is as follows. Component of the chloroplast ribosome (chloro-ribosome), a dedicated translation machinery responsible for the synthesis of chloroplast genome-encoded proteins, including proteins of the transcription and translation machinery and components of the photosynthetic apparatus. The chain is Large ribosomal subunit protein bL31c (RPL31) from Spinacia oleracea (Spinach).